Consider the following 542-residue polypeptide: Protein NODULATION SIGNALING PATHWAY 1 (542 aa).

A disordered region spans residues 73–150 (TSTTSLEPCG…SNCNSGNSKE (78 aa)). The segment covering 92–103 (LPKKRNATDESS) has biased composition (basic and acidic residues). Low complexity predominate over residues 136–148 (AKANGSNCNSGNS). Residues 145 to 532 (SGNSKEGRWA…QPVSFCSLWK (388 aa)) enclose the GRAS domain. Residues 152 to 214 (RWAEQLLNPC…HLSSSSSSPT (63 aa)) form a leucine repeat I (LRI) region. The segment at 233–332 (LLKFYEVSPW…GYNYYPRLLG (100 aa)) is VHIID. Positions 269–273 (LHILD) match the VHIID motif. A leucine repeat II (LRII) region spans residues 333 to 357 (YAQSININLQINRIENHSLQTLNAQ). Residues 367–452 (LIVCAQFRLH…RESDERRVME (86 aa)) form a PFYRE region. An SAW region spans residues 455–532 (AAKALTNQRE…QPVSFCSLWK (78 aa)).

This sequence belongs to the GRAS family. In terms of tissue distribution, highly expressed in roots.

The protein localises to the nucleus. Functionally, transcriptional regulator essential for Nod-factor-induced gene expression. Acts downstream of calcium spiking and a calcium/calmodulin-dependent protein kinase required for activation of early nodulation gene expression. Acts as a common symbiosis gene that positively contributes to the early steps of the arbuscular mycorrhizal fungus and rhizobial infection processes in roots. Transcription factor involved in the positive regulation of the beta-carotene isomerase D27, which participates in a pathway leading to biosynthesis of strigolactones in roots. The polypeptide is Protein NODULATION SIGNALING PATHWAY 1 (Lotus japonicus (Lotus corniculatus var. japonicus)).